A 312-amino-acid chain; its full sequence is Glyoxylate/hydroxypyruvate reductase A (312 aa).

Arg227 is an active-site residue. His275 acts as the Proton donor in catalysis.

It belongs to the D-isomer specific 2-hydroxyacid dehydrogenase family. GhrA subfamily.

The protein resides in the cytoplasm. It catalyses the reaction glycolate + NADP(+) = glyoxylate + NADPH + H(+). The enzyme catalyses (R)-glycerate + NAD(+) = 3-hydroxypyruvate + NADH + H(+). The catalysed reaction is (R)-glycerate + NADP(+) = 3-hydroxypyruvate + NADPH + H(+). In terms of biological role, catalyzes the NADPH-dependent reduction of glyoxylate and hydroxypyruvate into glycolate and glycerate, respectively. In Salmonella paratyphi C (strain RKS4594), this protein is Glyoxylate/hydroxypyruvate reductase A.